A 341-amino-acid polypeptide reads, in one-letter code: UDP-3-O-(3-hydroxymyristoyl)glucosamine N-acyltransferase (341 aa).

Residue H239 is the Proton acceptor of the active site.

It belongs to the transferase hexapeptide repeat family. LpxD subfamily. In terms of assembly, homotrimer.

The catalysed reaction is a UDP-3-O-[(3R)-3-hydroxyacyl]-alpha-D-glucosamine + a (3R)-hydroxyacyl-[ACP] = a UDP-2-N,3-O-bis[(3R)-3-hydroxyacyl]-alpha-D-glucosamine + holo-[ACP] + H(+). It carries out the reaction UDP-3-O-[(3R)-3-hydroxytetradecanoyl]-alpha-D-glucosamine + (3R)-hydroxytetradecanoyl-[ACP] = UDP-2-N,3-O-bis[(3R)-3-hydroxytetradecanoyl]-alpha-D-glucosamine + holo-[ACP] + H(+). It functions in the pathway glycolipid biosynthesis; lipid IV(A) biosynthesis; lipid IV(A) from (3R)-3-hydroxytetradecanoyl-[acyl-carrier-protein] and UDP-N-acetyl-alpha-D-glucosamine: step 3/6. In terms of biological role, catalyzes the N-acylation of UDP-3-O-(hydroxytetradecanoyl)glucosamine using 3-hydroxytetradecanoyl-ACP as the acyl donor. Is involved in the biosynthesis of lipid A, a phosphorylated glycolipid that anchors the lipopolysaccharide to the outer membrane of the cell. The polypeptide is UDP-3-O-(3-hydroxymyristoyl)glucosamine N-acyltransferase (Shigella dysenteriae serotype 1 (strain Sd197)).